Reading from the N-terminus, the 108-residue chain is Large ribosomal subunit protein uL24 (108 aa).

It belongs to the universal ribosomal protein uL24 family. As to quaternary structure, part of the 50S ribosomal subunit.

One of two assembly initiator proteins, it binds directly to the 5'-end of the 23S rRNA, where it nucleates assembly of the 50S subunit. In terms of biological role, one of the proteins that surrounds the polypeptide exit tunnel on the outside of the subunit. The sequence is that of Large ribosomal subunit protein uL24 from Mycoplasma capricolum subsp. capricolum (strain California kid / ATCC 27343 / NCTC 10154).